The following is a 156-amino-acid chain: Small ribosomal subunit protein uS7 (156 aa).

The protein belongs to the universal ribosomal protein uS7 family. In terms of assembly, part of the 30S ribosomal subunit. Contacts proteins S9 and S11.

Its function is as follows. One of the primary rRNA binding proteins, it binds directly to 16S rRNA where it nucleates assembly of the head domain of the 30S subunit. Is located at the subunit interface close to the decoding center, probably blocks exit of the E-site tRNA. This Actinobacillus pleuropneumoniae serotype 5b (strain L20) protein is Small ribosomal subunit protein uS7.